A 62-amino-acid chain; its full sequence is Photosystem II reaction center protein Z (62 aa).

2 helical membrane-spanning segments follow: residues 8–28 (LVSI…VILV) and 41–61 (YASA…NSFV).

It belongs to the PsbZ family. PSII is composed of 1 copy each of membrane proteins PsbA, PsbB, PsbC, PsbD, PsbE, PsbF, PsbH, PsbI, PsbJ, PsbK, PsbL, PsbM, PsbT, PsbX, PsbY, PsbZ, Psb30/Ycf12, at least 3 peripheral proteins of the oxygen-evolving complex and a large number of cofactors. It forms dimeric complexes.

It is found in the plastid. Its subcellular location is the chloroplast thylakoid membrane. Functionally, may control the interaction of photosystem II (PSII) cores with the light-harvesting antenna, regulates electron flow through the 2 photosystem reaction centers. PSII is a light-driven water plastoquinone oxidoreductase, using light energy to abstract electrons from H(2)O, generating a proton gradient subsequently used for ATP formation. In Guillardia theta (Cryptophyte), this protein is Photosystem II reaction center protein Z.